The primary structure comprises 261 residues: Potassium/proton antiporter CemA (261 aa).

The next 3 membrane-spanning stretches (helical) occupy residues 138–158, 184–204, and 221–241; these read IISHLLTNLIGFAFISAYLIL, FLILLATDLCIGFHSPHGWEL, and IISGLVSTFPVILDTILKYWI.

Belongs to the CemA family.

The protein localises to the plastid. It localises to the chloroplast inner membrane. It carries out the reaction K(+)(in) + H(+)(out) = K(+)(out) + H(+)(in). Contributes to K(+)/H(+) antiport activity by supporting proton efflux to control proton extrusion and homeostasis in chloroplasts in a light-dependent manner to modulate photosynthesis. Prevents excessive induction of non-photochemical quenching (NPQ) under continuous-light conditions. Indirectly promotes efficient inorganic carbon uptake into chloroplasts. The chain is Potassium/proton antiporter CemA from Pinus koraiensis (Korean pine).